We begin with the raw amino-acid sequence, 472 residues long: Chromosomal replication initiator protein DnaA (472 aa).

The domain I, interacts with DnaA modulators stretch occupies residues 1 to 80 (MDTKQIWFTT…YQVNVRVIIS (80 aa)). The interval 80 to 130 (SSATPAPSEPVAVTPSEPSPTTEVAEPSFASFNQAAPMLNQLPLGDPNRSS) is domain II. The segment at 131-347 (VLNPRYTFSS…GCLNRVIAYA (217 aa)) is domain III, AAA+ region. Residues G175, G177, K178, and T179 each coordinate ATP. The segment at 348 to 472 (NLNRTPVTVE…RQRLYGENAR (125 aa)) is domain IV, binds dsDNA.

This sequence belongs to the DnaA family. In terms of assembly, oligomerizes as a right-handed, spiral filament on DNA at oriC.

It is found in the cytoplasm. In terms of biological role, plays an essential role in the initiation and regulation of chromosomal replication. ATP-DnaA binds to the origin of replication (oriC) to initiate formation of the DNA replication initiation complex once per cell cycle. Binds the DnaA box (a 9 base pair repeat at the origin) and separates the double-stranded (ds)DNA. Forms a right-handed helical filament on oriC DNA; dsDNA binds to the exterior of the filament while single-stranded (ss)DNA is stabiized in the filament's interior. The ATP-DnaA-oriC complex binds and stabilizes one strand of the AT-rich DNA unwinding element (DUE), permitting loading of DNA polymerase. After initiation quickly degrades to an ADP-DnaA complex that is not apt for DNA replication. Binds acidic phospholipids. The chain is Chromosomal replication initiator protein DnaA from Herpetosiphon aurantiacus (strain ATCC 23779 / DSM 785 / 114-95).